We begin with the raw amino-acid sequence, 434 residues long: Histidinol dehydrogenase (434 aa).

NAD(+) is bound by residues tyrosine 130, glutamine 188, and asparagine 211. Substrate-binding residues include serine 237, glutamine 259, and histidine 262. Glutamine 259 and histidine 262 together coordinate Zn(2+). Catalysis depends on proton acceptor residues glutamate 326 and histidine 327. Positions 327, 360, 414, and 419 each coordinate substrate. Position 360 (aspartate 360) interacts with Zn(2+). Histidine 419 contacts Zn(2+).

The protein belongs to the histidinol dehydrogenase family. In terms of assembly, homodimer. Zn(2+) serves as cofactor.

It carries out the reaction L-histidinol + 2 NAD(+) + H2O = L-histidine + 2 NADH + 3 H(+). The protein operates within amino-acid biosynthesis; L-histidine biosynthesis; L-histidine from 5-phospho-alpha-D-ribose 1-diphosphate: step 9/9. Its function is as follows. Catalyzes the sequential NAD-dependent oxidations of L-histidinol to L-histidinaldehyde and then to L-histidine. The chain is Histidinol dehydrogenase from Shigella boydii serotype 4 (strain Sb227).